Reading from the N-terminus, the 857-residue chain is Protein argonaute-1 (857 aa).

One can recognise a PAZ domain in the interval 227 to 346 (PVIEFMCEVL…LPLEVCNIVA (120 aa)). 2 interaction with guide RNA regions span residues 309–314 (YFKQKY) and 522–564 (GKTP…LCLK). The Piwi domain maps to 515–816 (LIIVILPGKT…VAFRARYHLV (302 aa)). Positions 670-675 (PEGQLP) are impairs access of bound RNA to the active site. Interaction with guide RNA regions lie at residues 708-712 (RHHTR), 751-759 (HAGIQGTSR), and 788-813 (YVRC…RARY).

This sequence belongs to the argonaute family. Ago subfamily. Interacts with DDB1, DDX5, DDX6, DHX30, DHX36, DDX47, DICER1, AGO2, ELAVL1, HNRNPF, IGF2BP1, ILF3, IMP8, MATR3, MOV10, PABPC1, PRMT5, RBM4, SART3, TNRC6B, UPF1 and YBX1. Associates with polysomes and messenger ribonucleoproteins (mNRPs). Interacts with LIMD1, WTIP and AJUBA. Interacts with APOBEC3F, APOBEC3G and APOBEC3H. Ubiquitinated on surface-exposed lysines by a SCF-like E3 ubiquitin-protein ligase complex containing ZSWIM8 during target-directed microRNA degradation (TDMD), a process that mediates degradation of microRNAs (miRNAs). Ubiquitination by the SCF-like E3 ubiquitin-protein ligase complex containing ZSWIM8 leads to its subsequent degradation, thereby exposing miRNAs for degradation. ZSWIM8 recognizes and binds AGO1 when it is engaged with a TDMD target.

Its subcellular location is the cytoplasm. It is found in the P-body. Functionally, required for RNA-mediated gene silencing (RNAi). Binds to short RNAs such as microRNAs (miRNAs) or short interfering RNAs (siRNAs), and represses the translation of mRNAs which are complementary to them. Lacks endonuclease activity and does not appear to cleave target mRNAs. Also required for transcriptional gene silencing (TGS) of promoter regions which are complementary to bound short antigene RNAs (agRNAs). The protein is Protein argonaute-1 (AGO1) of Homo sapiens (Human).